The chain runs to 511 residues: MLRRYLATSASATASATATASASASASASKNSIKSNFKFHPEYKFKCGLEIHTQLKTKYKLFSLSRTSFNDTPNSHISYFDVGLPGTQPKLNPEALYLALKAAVALNCEVQQMSRFDRKHYFYPDQPMGYQITQNFHPLAKNGYLTFNEFDGVEIATSKDGANDTIRIEKIQLEQDTGKKYGDIIDYNRAGIPLIEVVTKPDFDSIEKVLAFVKKYQLLVRHFDICSGDLETGAIRVDVNVNVNDSPRVEIKNISTTGDIVNAIKYEYNRQVETLTKGGSLEQQTRNWDGIRTNLARSKENAIDYRYFPDSELPQIILSPDIAHDIKTSLPESPDSLLARLTSSPHNLQLAHAKNLITEPELLHYYESFFAIHRKPDADKWVFQELLTAFAKLGKTFDVEIVKPNVFAHLVSMDLNLVSKRLILKHMVQNEVSLDKAIEQLGFKEDQKPTTELAEDICKEIILTNQQIVDRIQSGHAKAVEVLVGNAMKKTRGKFAAQTFRSLFKEQLGIS.

A mitochondrion-targeting transit peptide spans 1–6; the sequence is MLRRYL.

The protein belongs to the GatB/GatE family. GatB subfamily. In terms of assembly, subunit of the heterotrimeric GatFAB amidotransferase (AdT) complex, composed of A, B and F subunits.

It is found in the mitochondrion. The catalysed reaction is L-glutamyl-tRNA(Gln) + L-glutamine + ATP + H2O = L-glutaminyl-tRNA(Gln) + L-glutamate + ADP + phosphate + H(+). Allows the formation of correctly charged Gln-tRNA(Gln) through the transamidation of misacylated Glu-tRNA(Gln) in the mitochondria. The reaction takes place in the presence of glutamine and ATP through an activated gamma-phospho-Glu-tRNA(Gln). In Lodderomyces elongisporus (strain ATCC 11503 / CBS 2605 / JCM 1781 / NBRC 1676 / NRRL YB-4239) (Yeast), this protein is Glutamyl-tRNA(Gln) amidotransferase subunit B, mitochondrial.